The chain runs to 599 residues: rRNA (cytosine-C(5))-methyltransferase NOP2C (599 aa).

One can recognise a PUA domain in the interval 158-265; it reads PKEVLVSRKC…IAVDLNHRVF (108 aa). S-adenosyl-L-methionine contacts are provided by residues 304–310, Asp-328, and Asp-355; that span reads CAAPGGK. Positions 372–454 are disordered; sequence LINGDNSSSM…GGRAGKSQGF (83 aa). The segment covering 378-388 has biased composition (low complexity); that stretch reads SSSMTSHSELS. The span at 399 to 412 shows a compositional bias: basic and acidic residues; sequence RRSEADKSCEKNDS. Residues 413 to 424 are compositionally biased toward polar residues; sequence TEQPNGGDNVSQ. Over residues 428–438 the composition is skewed to basic residues; that stretch reads RKNKGRLKNGR. An S-adenosyl-L-methionine-binding site is contributed by Asp-465. Cys-516 (nucleophile) is an active-site residue.

This sequence belongs to the class I-like SAM-binding methyltransferase superfamily. RsmB/NOP family.

Its subcellular location is the nucleus. It is found in the nucleolus. It carries out the reaction a cytidine in rRNA + S-adenosyl-L-methionine = a 5-methylcytidine in rRNA + S-adenosyl-L-homocysteine + H(+). Functionally, involved in ribosomal large subunit assembly. S-adenosyl-L-methionine-dependent methyltransferase that may methylates the C(5) position of cytosine in rRNA. May play a role in the regulation of the cell cycle and the increased nucleolar activity that is associated with the cell proliferation. Seems involved in the regulation of cell proliferation. In Arabidopsis thaliana (Mouse-ear cress), this protein is rRNA (cytosine-C(5))-methyltransferase NOP2C.